We begin with the raw amino-acid sequence, 462 residues long: Centrosomal protein of 55 kDa (462 aa).

A compositionally biased stretch (basic and acidic residues) spans 1 to 11; that stretch reads MSSRSPKDLIK. The disordered stretch occupies residues 1-26; it reads MSSRSPKDLIKSKWGSRPSSSKSDTA. Over residues 12–23 the composition is skewed to low complexity; the sequence is SKWGSRPSSSKS. A coiled-coil region spans residues 50–400; sequence KMAEKGRSRL…TQLESLKQLH (351 aa). Phosphoserine occurs at positions 96 and 99. Residues 157 to 235 are interaction with TSG101; that stretch reads ANCFNSSMNS…EGYLQVEKQK (79 aa). An interaction with PDCD6IP region spans residues 160-214; sequence FNSSMNSIHEKEMQLKDALEKNQQWLVYDQQREAYVKGLLAKIFELEKRTETAAA. The required for localization to the interphase centrosome and to the midbody during cytokinesis stretch occupies residues 354-462; sequence QMQACTLDFE…LLVHVEYCMK (109 aa). The disordered stretch occupies residues 410–430; the sequence is PLQREPESRVKATSPKSPSAA. A phosphoserine mark is found at serine 423, serine 426, and serine 428. Serine 434 carries the post-translational modification Phosphoserine; by PLK1.

Homodimer. Interacts (phosphorylated on Ser-423 and Ser-426) with PLK1; the interaction is indirect via the MTMR3:MTMR4 heterooligomer, occurs during early mitosis, regulates the phosphorylation of CEP55 by PLK1 and its recruitment to the midbody where it can mediate cell abscission. Interacts with AKAP9/CG-NAP; the interaction occurs in interphase and is lost upon mitotic entry. Interacts with PCNT/Kendrin; the interaction occurs in interphase and is lost upon mitotic entry. Directly interacts with PDCD6IP; this interaction is required for PDCD6IP targeting to the midbody; CEP55 binds PDCD6IP in a 2:1 stoichiometry; PDCD6IP competes with TSG101 for the same binding site. Interacts with TSG101; TSG101 competes with PDCD6IP for the same binding site; interaction is required for cytokinesis. Interacts with MVB12A, VPS37B, VPS37C and VPS28. Post-translationally, there is a hierachy of phosphorylation, where both Ser-423 and Ser-426 are phosphorylated at the onset of mitosis, prior to Ser-434. Phosphorylation at Ser-423 and Ser-426 is required for dissociation from the centrosome at the G2/M boundary. Phosphorylation at the 3 sites, Ser-423, Ser-426 and Ser-434, is required for protein function at the final stages of cell division to complete cytokinesis successfully.

The protein resides in the cytoplasm. Its subcellular location is the cytoskeleton. It localises to the microtubule organizing center. The protein localises to the centrosome. It is found in the centriole. The protein resides in the cleavage furrow. Its subcellular location is the midbody. It localises to the midbody ring. In terms of biological role, plays a role in mitotic exit and cytokinesis. Recruits PDCD6IP and TSG101 to midbody during cytokinesis. Required for successful completion of cytokinesis. Not required for microtubule nucleation. Plays a role in the development of the brain and kidney. The protein is Centrosomal protein of 55 kDa of Mus musculus (Mouse).